The chain runs to 346 residues: MFNVSALRAATPSIASVSSVASPSEQHGLSTSVGVGVNDTTSRTGDGGAASSASSASAAPQQQSQSALHNKLEAKWDTLLPTDTNLQCSTWPDSIPLLAGYSATPTFSFDPCTYGSYDPSAYFASNGIAGSMYTLPDQFPRSENDMLDNSNTSNGNKSDKDGIKLEDEDEILEDEENDEEDDGTGKRKKRKRRVLFTKAQTYELERRFRSQKYLSAPEREALAMQIRLTPTQVKIWFQNHRYKTKKSHTDKPINAALLTTMPNAFSSQSTAASFPTRAMPIPMLVRDSSARSSDISSTSPYTVAFGSANSGYLPTPSAYLPATSGYFSNGPSAASSYMTNTQWWPS.

2 disordered regions span residues 1–68 and 135–190; these read MFNV…QSAL and LPDQ…RKKR. Low complexity predominate over residues 9–24; sequence AATPSIASVSSVASPS. Polar residues predominate over residues 25–44; that stretch reads EQHGLSTSVGVGVNDTTSRT. Residues 49-67 are compositionally biased toward low complexity; sequence AASSASSASAAPQQQSQSA. The span at 147-156 shows a compositional bias: polar residues; that stretch reads LDNSNTSNGN. Over residues 166 to 182 the composition is skewed to acidic residues; the sequence is EDEDEILEDEENDEEDD. Positions 189–248 form a DNA-binding region, homeobox; the sequence is KRKRRVLFTKAQTYELERRFRSQKYLSAPEREALAMQIRLTPTQVKIWFQNHRYKTKKSH.

It belongs to the NK-2 homeobox family.

Its subcellular location is the nucleus. Involved in combinatorial activation of gene expression in pharyngeal muscle. Specifically binds a site necessary for activity of the B subelement of myo-2 enhancer. Functionally, regulates distal tip cell fate. In Caenorhabditis elegans, this protein is Homeobox protein ceh-22 (ceh-22).